The following is a 106-amino-acid chain: MSKLHIKKGDTVMVISGEDKGHSGRVLEVLVKEQRAIVEGLNMIKKHAKPSAKNPQGGIISKEAPIHISNLNVVDPKTGKATRIGRRLNENGKLVRYAKKSGEEIK.

This sequence belongs to the universal ribosomal protein uL24 family. Part of the 50S ribosomal subunit.

Its function is as follows. One of two assembly initiator proteins, it binds directly to the 5'-end of the 23S rRNA, where it nucleates assembly of the 50S subunit. In terms of biological role, one of the proteins that surrounds the polypeptide exit tunnel on the outside of the subunit. The chain is Large ribosomal subunit protein uL24 from Porphyromonas gingivalis (strain ATCC 33277 / DSM 20709 / CIP 103683 / JCM 12257 / NCTC 11834 / 2561).